The primary structure comprises 154 residues: ATP synthase subunit b', chloroplastic (154 aa).

The helical transmembrane segment at Gly-22 to Leu-42 threads the bilayer.

Belongs to the ATPase B chain family. In terms of assembly, F-type ATPases have 2 components, F(1) - the catalytic core - and F(0) - the membrane proton channel. F(1) has five subunits: alpha(3), beta(3), gamma(1), delta(1), epsilon(1). F(0) has four main subunits: a(1), b(1), b'(1) and c(10-14). The alpha and beta chains form an alternating ring which encloses part of the gamma chain. F(1) is attached to F(0) by a central stalk formed by the gamma and epsilon chains, while a peripheral stalk is formed by the delta, b and b' chains.

The protein localises to the plastid. It is found in the chloroplast thylakoid membrane. F(1)F(0) ATP synthase produces ATP from ADP in the presence of a proton or sodium gradient. F-type ATPases consist of two structural domains, F(1) containing the extramembraneous catalytic core and F(0) containing the membrane proton channel, linked together by a central stalk and a peripheral stalk. During catalysis, ATP synthesis in the catalytic domain of F(1) is coupled via a rotary mechanism of the central stalk subunits to proton translocation. Functionally, component of the F(0) channel, it forms part of the peripheral stalk, linking F(1) to F(0). The b'-subunit is a diverged and duplicated form of b found in plants and photosynthetic bacteria. This is ATP synthase subunit b', chloroplastic from Vaucheria litorea (Yellow-green alga).